A 684-amino-acid chain; its full sequence is Glycine--tRNA ligase beta subunit (684 aa).

It belongs to the class-II aminoacyl-tRNA synthetase family. In terms of assembly, tetramer of two alpha and two beta subunits.

The protein localises to the cytoplasm. The enzyme catalyses tRNA(Gly) + glycine + ATP = glycyl-tRNA(Gly) + AMP + diphosphate. This Pseudomonas entomophila (strain L48) protein is Glycine--tRNA ligase beta subunit.